Consider the following 96-residue polypeptide: Auxin-responsive protein SAUR29 (96 aa).

It belongs to the ARG7 family.

It is found in the cell membrane. Functionally, functions as a positive effector of cell expansion through modulation of auxin transport. Involved in thermo-responsiveness of plant architecture. Enhances plasma membrane H(+)-ATPase. This is Auxin-responsive protein SAUR29 from Arabidopsis thaliana (Mouse-ear cress).